Consider the following 236-residue polypeptide: Purine nucleoside phosphorylase DeoD-type 2 (236 aa).

H5 is an a purine D-ribonucleoside binding site. Phosphate-binding positions include G21, R25, R44, and 88–91; that span reads RVGS. Residues 180–182 and 204–205 each bind a purine D-ribonucleoside; these read DME and SD. The active-site Proton donor is the D205.

The protein belongs to the PNP/UDP phosphorylase family. In terms of assembly, homohexamer; trimer of homodimers.

It catalyses the reaction a purine D-ribonucleoside + phosphate = a purine nucleobase + alpha-D-ribose 1-phosphate. The enzyme catalyses a purine 2'-deoxy-D-ribonucleoside + phosphate = a purine nucleobase + 2-deoxy-alpha-D-ribose 1-phosphate. Functionally, catalyzes the reversible phosphorolytic breakdown of the N-glycosidic bond in the beta-(deoxy)ribonucleoside molecules, with the formation of the corresponding free purine bases and pentose-1-phosphate. This chain is Purine nucleoside phosphorylase DeoD-type 2, found in Photobacterium profundum (strain SS9).